The following is a 229-amino-acid chain: uncharacterized protein (229 aa).

The HTH cro/C1-type domain occupies 24 to 78 (LRKWRSIFNASQSDLARKLGISPSVISDYESGRRKPGTAFLKKFVCALIELDGER). Residues 35–54 (QSDLARKLGISPSVISDYES) constitute a DNA-binding region (H-T-H motif).

This is an uncharacterized protein from Archaeoglobus fulgidus (strain ATCC 49558 / DSM 4304 / JCM 9628 / NBRC 100126 / VC-16).